A 217-amino-acid chain; its full sequence is Adenylate kinase (217 aa).

Residue G11 to T16 coordinates ATP. Residues S31 to V60 are NMP. AMP is bound by residues T32, R37, D58–V60, G86–R89, and Q93. Positions A127–D165 are LID. Residue R128 participates in ATP binding. Zn(2+) contacts are provided by C131 and C134. Position 137–138 (T137–Y138) interacts with ATP. Zn(2+) is bound by residues C151 and C154. Positions 162 and 173 each coordinate AMP. Q201 serves as a coordination point for ATP.

This sequence belongs to the adenylate kinase family. As to quaternary structure, monomer.

The protein resides in the cytoplasm. The catalysed reaction is AMP + ATP = 2 ADP. Its pathway is purine metabolism; AMP biosynthesis via salvage pathway; AMP from ADP: step 1/1. Its function is as follows. Catalyzes the reversible transfer of the terminal phosphate group between ATP and AMP. Plays an important role in cellular energy homeostasis and in adenine nucleotide metabolism. The chain is Adenylate kinase from Lactobacillus delbrueckii subsp. bulgaricus (strain ATCC 11842 / DSM 20081 / BCRC 10696 / JCM 1002 / NBRC 13953 / NCIMB 11778 / NCTC 12712 / WDCM 00102 / Lb 14).